A 504-amino-acid chain; its full sequence is Anaerobic nitric oxide reductase transcription regulator NorR (504 aa).

Asp-57 is subject to 4-aspartylphosphate. A Sigma-54 factor interaction domain is found at 187-416; sequence MIGLSPGMTQ…LEHAIHRAVV (230 aa). Residues 215 to 222 and 278 to 287 each bind ATP; these read GETGTGKE and ADNGTLFLDE. The segment at residues 479–498 is a DNA-binding region (H-T-H motif); sequence WAACARMLETDVANLHRLAK.

It participates in nitrogen metabolism; nitric oxide reduction. Its function is as follows. Required for the expression of anaerobic nitric oxide (NO) reductase, acts as a transcriptional activator for at least the norVW operon. Activation also requires sigma-54. The polypeptide is Anaerobic nitric oxide reductase transcription regulator NorR (Escherichia coli O6:K15:H31 (strain 536 / UPEC)).